Here is a 69-residue protein sequence, read N- to C-terminus: Conotoxin Lp3.1 (69 aa).

An N-terminal signal peptide occupies residues 1 to 20 (MLKMGVLLFIFLVLFPLTTL). Positions 21–54 (ELDTDRPVERHAAIKQDLKPQERRGIRLHAPRDE) are excised as a propeptide. Cystine bridges form between Cys55/Cys67, Cys56/Cys65, and Cys61/Cys68.

Belongs to the conotoxin M superfamily. Expressed by the venom duct.

It is found in the secreted. The chain is Conotoxin Lp3.1 from Conus leopardus (Leopard cone).